An 88-amino-acid polypeptide reads, in one-letter code: Homeobox protein knotted-1-like 2 (88 aa).

Residues 4–24 (ELKHELKQGYRDKLVDIREEI) enclose the ELK domain. Residues 25-88 (LRKRRAGKLP…NQRKRNWHNN (64 aa)) constitute a DNA-binding region (homeobox; TALE-type).

The protein belongs to the TALE/KNOX homeobox family. As to expression, expressed in all tissues examined. Highest expression in leaves.

The protein localises to the nucleus. The chain is Homeobox protein knotted-1-like 2 (KNOX2) from Zea mays (Maize).